A 112-amino-acid chain; its full sequence is UPF0102 protein NIS_1551 (112 aa).

The protein belongs to the UPF0102 family.

In Nitratiruptor sp. (strain SB155-2), this protein is UPF0102 protein NIS_1551.